The primary structure comprises 356 residues: Histidinol-phosphate aminotransferase (356 aa).

K214 is modified (N6-(pyridoxal phosphate)lysine).

This sequence belongs to the class-II pyridoxal-phosphate-dependent aminotransferase family. Histidinol-phosphate aminotransferase subfamily. Homodimer. It depends on pyridoxal 5'-phosphate as a cofactor.

The catalysed reaction is L-histidinol phosphate + 2-oxoglutarate = 3-(imidazol-4-yl)-2-oxopropyl phosphate + L-glutamate. Its pathway is amino-acid biosynthesis; L-histidine biosynthesis; L-histidine from 5-phospho-alpha-D-ribose 1-diphosphate: step 7/9. The polypeptide is Histidinol-phosphate aminotransferase (Shigella flexneri serotype 5b (strain 8401)).